The following is a 157-amino-acid chain: SsrA-binding protein (157 aa).

A compositionally biased stretch (basic and acidic residues) spans 134–151; it reads HDKRETEKKRDWSKEKGR. Residues 134 to 157 form a disordered region; the sequence is HDKRETEKKRDWSKEKGRLMRAKG.

The protein belongs to the SmpB family.

The protein resides in the cytoplasm. Required for rescue of stalled ribosomes mediated by trans-translation. Binds to transfer-messenger RNA (tmRNA), required for stable association of tmRNA with ribosomes. tmRNA and SmpB together mimic tRNA shape, replacing the anticodon stem-loop with SmpB. tmRNA is encoded by the ssrA gene; the 2 termini fold to resemble tRNA(Ala) and it encodes a 'tag peptide', a short internal open reading frame. During trans-translation Ala-aminoacylated tmRNA acts like a tRNA, entering the A-site of stalled ribosomes, displacing the stalled mRNA. The ribosome then switches to translate the ORF on the tmRNA; the nascent peptide is terminated with the 'tag peptide' encoded by the tmRNA and targeted for degradation. The ribosome is freed to recommence translation, which seems to be the essential function of trans-translation. This Rhodopseudomonas palustris (strain BisA53) protein is SsrA-binding protein.